The sequence spans 118 residues: Large ribosomal subunit protein uL18 (118 aa).

The protein belongs to the universal ribosomal protein uL18 family. Part of the 50S ribosomal subunit; part of the 5S rRNA/L5/L18/L25 subcomplex. Contacts the 5S and 23S rRNAs.

Functionally, this is one of the proteins that bind and probably mediate the attachment of the 5S RNA into the large ribosomal subunit, where it forms part of the central protuberance. This is Large ribosomal subunit protein uL18 from Dechloromonas aromatica (strain RCB).